The sequence spans 200 residues: MAWGGVHTCCFHLCCCCSWPQGAVPEELHKHPGQTLLLQCQYSPKRGPYQPKSWCQQTSPSRCTLLVTSSKPWTAVQKSHYTIWDKPNAGFFNITMIQLTQNDSGFYWCGIYNASENIITVLRNISLVVSPAPTTSPMWTLPWLPTSTVLITSPEGTSGHPSINGSETRKSRAPACLGSGGPRFLVLVLCGLLLAKGLML.

Positions 1–25 (MAWGGVHTCCFHLCCCCSWPQGAVP) are cleaved as a signal peptide. In terms of domain architecture, Ig-like V-type spans 26 to 126 (EELHKHPGQT…NIITVLRNIS (101 aa)). A disulfide bridge links Cys-40 with Cys-109. An N-linked (GlcNAc...) asparagine glycan is attached at Asn-93.

The protein resides in the secreted. In terms of biological role, positively regulates Toll-like receptor TLR7 signaling in macrophages. The polypeptide is Trem-like transcript 4 protein (TREML4) (Homo sapiens (Human)).